Consider the following 342-residue polypeptide: MSNSNGDNKYGVITIGDEKKFQATIAPLGATLVDLKVNGQSVVQGYSNVQDYLTDGNMMGATVGRYANRIAKGVFSLDDGPHKLTVNNCGNTNHSSISSLNLKQYKASPVENPSKGVYVVEFKLLDDHTQPNPNEFPGDLEVTVKYTLNVAEMTLDMEYQAQLVRGDATPINMTNHSYFNLNKVKSEKSIRGTEVKVCSNKSLEVTEGALLPTGKIIERNIATFDSTKPTVLHEDTPVFDCTFIIDANKDLKTTDSVSVNKLVPVFKAYHPESHIKFEVSTTEPTVHLYTGDNLCGKFVPRSGFAVQQGRYVDAINRDEWRGCVLLKRGEVYTSKTQYKFDI.

Arg69 contacts substrate. The active-site Proton donor is His176. Asp240 contacts substrate.

The protein belongs to the aldose epimerase family.

This is an uncharacterized protein from Saccharomyces cerevisiae (strain ATCC 204508 / S288c) (Baker's yeast).